The sequence spans 273 residues: 4-hydroxy-tetrahydrodipicolinate reductase (273 aa).

NAD(+) contacts are provided by residues 12 to 17 and glutamate 38; that span reads GAGGRM. Residue arginine 39 coordinates NADP(+). Residues 102–104 and 126–129 contribute to the NAD(+) site; these read GTT and AANF. Histidine 159 (proton donor/acceptor) is an active-site residue. Histidine 160 contacts (S)-2,3,4,5-tetrahydrodipicolinate. Lysine 163 (proton donor) is an active-site residue. (S)-2,3,4,5-tetrahydrodipicolinate is bound at residue 169–170; it reads GT.

It belongs to the DapB family. Homotetramer.

It localises to the cytoplasm. It catalyses the reaction (S)-2,3,4,5-tetrahydrodipicolinate + NAD(+) + H2O = (2S,4S)-4-hydroxy-2,3,4,5-tetrahydrodipicolinate + NADH + H(+). The catalysed reaction is (S)-2,3,4,5-tetrahydrodipicolinate + NADP(+) + H2O = (2S,4S)-4-hydroxy-2,3,4,5-tetrahydrodipicolinate + NADPH + H(+). It functions in the pathway amino-acid biosynthesis; L-lysine biosynthesis via DAP pathway; (S)-tetrahydrodipicolinate from L-aspartate: step 4/4. Its function is as follows. Catalyzes the conversion of 4-hydroxy-tetrahydrodipicolinate (HTPA) to tetrahydrodipicolinate. The polypeptide is 4-hydroxy-tetrahydrodipicolinate reductase (Salmonella agona (strain SL483)).